Consider the following 438-residue polypeptide: 2-(3-amino-3-carboxypropyl)histidine synthase subunit 1 (438 aa).

[4Fe-4S] cluster is bound by residues Cys110, Cys214, and Cys342. Phosphoserine is present on Ser418.

It belongs to the DPH1/DPH2 family. DPH1 subfamily. As to quaternary structure, component of the 2-(3-amino-3-carboxypropyl)histidine synthase complex composed of DPH1, DPH2, DPH3 and a NADH-dependent reductase. Interacts with DPH2 and RBM8A. [4Fe-4S] cluster is required as a cofactor.

It is found in the nucleus. Its subcellular location is the cytoplasm. It catalyses the reaction L-histidyl-[translation elongation factor 2] + S-adenosyl-L-methionine = 2-[(3S)-amino-3-carboxypropyl]-L-histidyl-[translation elongation factor 2] + S-methyl-5'-thioadenosine + H(+). The protein operates within protein modification; peptidyl-diphthamide biosynthesis. Catalyzes the first step of diphthamide biosynthesis, a post-translational modification of histidine which occurs in elongation factor 2. DPH1 and DPH2 transfer a 3-amino-3-carboxypropyl (ACP) group from S-adenosyl-L-methionine (SAM) to a histidine residue, the reaction is assisted by a reduction system comprising DPH3 and a NADH-dependent reductase. The polypeptide is 2-(3-amino-3-carboxypropyl)histidine synthase subunit 1 (DPH1) (Bos taurus (Bovine)).